Reading from the N-terminus, the 213-residue chain is LexA repressor 2 (213 aa).

A DNA-binding region (H-T-H motif) is located at residues 27-47; it reads QTEIARAFGFKGVRAAQYHLE. Active-site for autocatalytic cleavage activity residues include serine 133 and lysine 170.

The protein belongs to the peptidase S24 family. As to quaternary structure, homodimer.

It catalyses the reaction Hydrolysis of Ala-|-Gly bond in repressor LexA.. Functionally, represses a number of genes involved in the response to DNA damage (SOS response), including recA and lexA. In the presence of single-stranded DNA, RecA interacts with LexA causing an autocatalytic cleavage which disrupts the DNA-binding part of LexA, leading to derepression of the SOS regulon and eventually DNA repair. The sequence is that of LexA repressor 2 from Xanthomonas campestris pv. campestris (strain ATCC 33913 / DSM 3586 / NCPPB 528 / LMG 568 / P 25).